We begin with the raw amino-acid sequence, 651 residues long: L-aspartate oxidase, chloroplastic (651 aa).

A chloroplast-targeting transit peptide spans 1-74 (MAAHVSTGNI…PISETSKPIR (74 aa)). FAD is bound by residues 92-95 (SGVA), lysine 114, 121-128 (NTNYAQGG), and aspartate 292. Arginine 368 (proton donor/acceptor) is an active-site residue. FAD is bound by residues glutamate 453 and 469 to 470 (SL).

Belongs to the FAD-dependent oxidoreductase 2 family. NadB subfamily. As to quaternary structure, interacts in vitro with QS. FAD is required as a cofactor.

The protein localises to the plastid. The protein resides in the chloroplast. It carries out the reaction L-aspartate + O2 = iminosuccinate + H2O2. It functions in the pathway cofactor biosynthesis; NAD(+) biosynthesis; iminoaspartate from L-aspartate (oxidase route): step 1/1. Functionally, catalyzes the oxidation of L-aspartate to iminoaspartate. Can complement nadB-deficient E.coli mutant. Plays a role in stomatal immunity. This is L-aspartate oxidase, chloroplastic from Arabidopsis thaliana (Mouse-ear cress).